Consider the following 514-residue polypeptide: Putative ribose/galactose/methyl galactoside import ATP-binding protein 3 (514 aa).

ABC transporter domains lie at 21-256 (LRLD…VGRT) and 267-512 (VPTD…SGRS). 53–60 (GENGAGKS) is a binding site for ATP.

It belongs to the ABC transporter superfamily. Carbohydrate importer 2 (CUT2) (TC 3.A.1.2) family.

The protein resides in the cell inner membrane. The enzyme catalyses D-ribose(out) + ATP + H2O = D-ribose(in) + ADP + phosphate + H(+). It catalyses the reaction D-galactose(out) + ATP + H2O = D-galactose(in) + ADP + phosphate + H(+). Functionally, part of an ABC transporter complex involved in carbohydrate import. Could be involved in ribose, galactose and/or methyl galactoside import. Responsible for energy coupling to the transport system. The protein is Putative ribose/galactose/methyl galactoside import ATP-binding protein 3 of Burkholderia cenocepacia (strain HI2424).